The chain runs to 1285 residues: DNA polymerase II large subunit (1285 aa).

The segment at 565–586 is disordered; that stretch reads TRIGGRMGRPGKSKPREMRPPP.

The protein belongs to the archaeal DNA polymerase II family. Heterodimer of a large subunit and a small subunit. In terms of processing, this protein undergoes a protein self splicing that involves a post-translational excision of the intervening region (intein) followed by peptide ligation.

The enzyme catalyses DNA(n) + a 2'-deoxyribonucleoside 5'-triphosphate = DNA(n+1) + diphosphate. It catalyses the reaction Exonucleolytic cleavage in the 3'- to 5'-direction to yield nucleoside 5'-phosphates.. Functionally, possesses two activities: a DNA synthesis (polymerase) and an exonucleolytic activity that degrades single-stranded DNA in the 3'- to 5'-direction. Has a template-primer preference which is characteristic of a replicative DNA polymerase. The sequence is that of DNA polymerase II large subunit from Methanoculleus marisnigri (strain ATCC 35101 / DSM 1498 / JR1).